The following is a 354-amino-acid chain: NADH-quinone oxidoreductase subunit H (354 aa).

A run of 8 helical transmembrane segments spans residues L25 to W45, W91 to I111, L126 to A146, M170 to V190, F205 to I225, M253 to A273, F290 to W310, and V330 to L350.

Belongs to the complex I subunit 1 family. In terms of assembly, NDH-1 is composed of 14 different subunits. Subunits NuoA, H, J, K, L, M, N constitute the membrane sector of the complex.

Its subcellular location is the cell inner membrane. It carries out the reaction a quinone + NADH + 5 H(+)(in) = a quinol + NAD(+) + 4 H(+)(out). Its function is as follows. NDH-1 shuttles electrons from NADH, via FMN and iron-sulfur (Fe-S) centers, to quinones in the respiratory chain. The immediate electron acceptor for the enzyme in this species is believed to be ubiquinone. Couples the redox reaction to proton translocation (for every two electrons transferred, four hydrogen ions are translocated across the cytoplasmic membrane), and thus conserves the redox energy in a proton gradient. This subunit may bind ubiquinone. This Burkholderia mallei (strain ATCC 23344) protein is NADH-quinone oxidoreductase subunit H.